The following is a 389-amino-acid chain: Phosphoglycerate kinase (389 aa).

Substrate contacts are provided by residues 21–23 (DLN), Arg-36, 59–62 (HLGR), Arg-112, and Arg-145. Residues Lys-196, Glu-313, and 342–345 (GGDT) contribute to the ATP site.

Belongs to the phosphoglycerate kinase family. Monomer.

It localises to the cytoplasm. The enzyme catalyses (2R)-3-phosphoglycerate + ATP = (2R)-3-phospho-glyceroyl phosphate + ADP. It participates in carbohydrate degradation; glycolysis; pyruvate from D-glyceraldehyde 3-phosphate: step 2/5. This chain is Phosphoglycerate kinase, found in Mannheimia succiniciproducens (strain KCTC 0769BP / MBEL55E).